The following is a 37-amino-acid chain: Large ribosomal subunit protein bL36 (37 aa).

It belongs to the bacterial ribosomal protein bL36 family.

This is Large ribosomal subunit protein bL36 from Ureaplasma urealyticum serovar 10 (strain ATCC 33699 / Western).